The primary structure comprises 144 residues: Transcription antitermination protein NusB (144 aa).

Belongs to the NusB family.

Involved in transcription antitermination. Required for transcription of ribosomal RNA (rRNA) genes. Binds specifically to the boxA antiterminator sequence of the ribosomal RNA (rrn) operons. This is Transcription antitermination protein NusB from Pasteurella multocida (strain Pm70).